We begin with the raw amino-acid sequence, 88 residues long: Small ribosomal subunit protein bS18 (88 aa).

Positions 1–11 (MTTANTTAKDN) are enriched in low complexity. Residues 1 to 21 (MTTANTTAKDNAATKKRGRKA) form a disordered region.

Belongs to the bacterial ribosomal protein bS18 family. In terms of assembly, part of the 30S ribosomal subunit. Forms a tight heterodimer with protein bS6.

Binds as a heterodimer with protein bS6 to the central domain of the 16S rRNA, where it helps stabilize the platform of the 30S subunit. This Thermoanaerobacter pseudethanolicus (strain ATCC 33223 / 39E) (Clostridium thermohydrosulfuricum) protein is Small ribosomal subunit protein bS18.